The primary structure comprises 365 residues: Putrescine carbamoyltransferase (365 aa).

Residues 54–58, arginine 105, and histidine 132 each bind carbamoyl phosphate; that span reads STRTR. 277–280 serves as a coordination point for putrescine; sequence HCLP.

This sequence belongs to the aspartate/ornithine carbamoyltransferase superfamily. PTCase family. In terms of assembly, homotrimer.

The protein localises to the cytoplasm. It carries out the reaction carbamoyl phosphate + putrescine = N-carbamoylputrescine + phosphate + H(+). It participates in amine and polyamine biosynthesis; putrescine biosynthesis via agmatine pathway; putrescine from N-carbamoylputrescine (transferase route): step 1/1. Functionally, catalyzes the phosphorolysis of N-carbamoylputrescine to form carbamoyl phosphate and putrescine. Is involved in the degradation pathway of the polyamine agmatine. The polypeptide is Putrescine carbamoyltransferase (Mycoplasma mycoides subsp. mycoides SC (strain CCUG 32753 / NCTC 10114 / PG1)).